Reading from the N-terminus, the 432-residue chain is Enolase (432 aa).

Residue glutamine 163 participates in (2R)-2-phosphoglycerate binding. Glutamate 205 (proton donor) is an active-site residue. Residues aspartate 242, glutamate 288, and aspartate 315 each coordinate Mg(2+). Positions 340, 369, 370, and 391 each coordinate (2R)-2-phosphoglycerate. Lysine 340 functions as the Proton acceptor in the catalytic mechanism.

It belongs to the enolase family. As to quaternary structure, homodimer. Mg(2+) serves as cofactor.

The protein localises to the cytoplasm. The protein resides in the secreted. It is found in the cell surface. The catalysed reaction is (2R)-2-phosphoglycerate = phosphoenolpyruvate + H2O. It participates in carbohydrate degradation; glycolysis; pyruvate from D-glyceraldehyde 3-phosphate: step 4/5. Its activity is regulated as follows. The covalent binding to the substrate causes inactivation of the enzyme, and possibly serves as a signal for the export of the protein. In terms of biological role, catalyzes the reversible conversion of 2-phosphoglycerate (2-PG) into phosphoenolpyruvate (PEP). It is essential for the degradation of carbohydrates via glycolysis. This chain is Enolase, found in Enterococcus hirae.